The primary structure comprises 1088 residues: MNKLRDKFVDSTVEEERLRENRNHEKYWYRWGPYLSERSWATVREDYSLNGDAWSNFPFEHANARVFRWGEDGLFGVSDNKQLVCMNVALWNGKDERLKERLFGLTGPQGNHGEDVKELYFYLDNTPTHSYMKALYKYPFKKAFPYKELVQKNGERGYEDKEFEVYDIDGLYRDSETGDNPYFDVFFEMAKDDENPSELNFRLTIHNRSKIDSGELYIAPQLFFRNTWAFDGTRTKDKPLLERDAEAANLINMTHKKYGNCQMVFQPSPGGFSSGTNEEEEDKEVEDIDPLLLFTDNESNLVKLFNEEKNPSEYTKDAFEEYLVQGKTDAVNPENKGTKACAVYHFKNIPPGEYVTVRYKFTNDPKNSIFKAQNLAVVDEDEFDLIFDNREEEADNFYWRITPLPISDELRNLQRQAFSGLLWTKQFYNFTYDAWYNGDANVKPRPPPNRANGRNKNWKHLYIEDILSMPDKWEYPFFASWDTAFHCIPLAMIDPEFAKRQLDLLTREWYMHPNGQIPAYEWNFNDVNPPVHAWAVYRVFKIERNMYNREDRTFLERVFQKLLLNFTWWVNRKDTEGKNVFEGGFLGLDNIGVFNRSEPLPTGGTLEQADSTGWMAFFSLQMLNIALELAKENPVYEDIASKFFEHFILISDSMSFEYATDITGEKCKEVIKQNLWNEADKFYYDAISWGDHKVQLPIRSLVGLIPLYASMTLEPSIIKQFRGFKKRVDWFVNNRPEIFDRNIASMSKKGVGERLLLSLVTKERLTAILSRLLDETEFLSPYGIRSLSKYHEKHPFEMNVNGVEYMVKYLPGESDSGMFGGNSNWRGPIWFPTSFLIMEALQRFYLYYGSDFKVECPVGSGDYLNLAEVAEELGYRMIHLFVPDENGERAIHYGDHSKFLSSDPYFRDYVPFFEYFDGDTGRGLGASHQCGWTALVAKWISDVGISCVRLPRTPRSSVATTASTESSEQGPKMKRMARRKSAKSLVNYTATILDLTEEEKRHHRIGGTHSGLTPQSSISSDKARHLMEEMNEEEGIHETVVPEDRHNFETKLIGKLKDKVKNMKVTDKAKDEDIDPMDPMSPLNKDVS.

Position 299 is a phosphoserine (Ser-299). The segment at 954 to 980 (PRSSVATTASTESSEQGPKMKRMARRK) is disordered. Residues 956–968 (SSVATTASTESSE) show a composition bias toward low complexity. Position 984 is a phosphoserine (Ser-984). Thr-1013 is modified (phosphothreonine). The tract at residues 1063 to 1088 (MKVTDKAKDEDIDPMDPMSPLNKDVS) is disordered. Phosphoserine is present on Ser-1081.

This is an uncharacterized protein from Saccharomyces cerevisiae (strain ATCC 204508 / S288c) (Baker's yeast).